Reading from the N-terminus, the 155-residue chain is Small ribosomal subunit protein uS7 (155 aa).

This sequence belongs to the universal ribosomal protein uS7 family. In terms of assembly, part of the 30S ribosomal subunit. Contacts proteins S9 and S11.

In terms of biological role, one of the primary rRNA binding proteins, it binds directly to 16S rRNA where it nucleates assembly of the head domain of the 30S subunit. Is located at the subunit interface close to the decoding center, probably blocks exit of the E-site tRNA. The polypeptide is Small ribosomal subunit protein uS7 (Xylella fastidiosa (strain M12)).